The chain runs to 207 residues: Large ribosomal subunit protein uL4 (207 aa).

Residues 58–85 form a disordered region; the sequence is AGSGKKPFKQKGTGQARQGCRRAPQYPG.

Belongs to the universal ribosomal protein uL4 family. Part of the 50S ribosomal subunit.

One of the primary rRNA binding proteins, this protein initially binds near the 5'-end of the 23S rRNA. It is important during the early stages of 50S assembly. It makes multiple contacts with different domains of the 23S rRNA in the assembled 50S subunit and ribosome. Functionally, forms part of the polypeptide exit tunnel. The protein is Large ribosomal subunit protein uL4 of Geotalea uraniireducens (strain Rf4) (Geobacter uraniireducens).